The following is a 174-amino-acid chain: Transcription factor bHLH36 (174 aa).

Positions 1-53 (MEKMMHRETERQRRQEMASLYASLRSLLPLHFIKGKRSTSDQVNEAVNYIKYL) constitute a bHLH domain.

In terms of assembly, homodimer. Expressed constitutively in roots, leaves, stems, and flowers.

It is found in the nucleus. The protein is Transcription factor bHLH36 (BHLH36) of Arabidopsis thaliana (Mouse-ear cress).